Consider the following 335-residue polypeptide: Luciferase-like monooxygenase (335 aa).

The protein to bacterial alkanal monooxygenase alpha and beta chains.

The sequence is that of Luciferase-like monooxygenase (yhbW) from Escherichia coli O6:H1 (strain CFT073 / ATCC 700928 / UPEC).